The sequence spans 387 residues: 3-ketoacyl-CoA thiolase (387 aa).

The active-site Acyl-thioester intermediate is Cys-91. Active-site proton acceptor residues include His-343 and Cys-373.

It belongs to the thiolase-like superfamily. Thiolase family. As to quaternary structure, heterotetramer of two alpha chains (FadB) and two beta chains (FadA).

The protein resides in the cytoplasm. It carries out the reaction an acyl-CoA + acetyl-CoA = a 3-oxoacyl-CoA + CoA. It participates in lipid metabolism; fatty acid beta-oxidation. Its function is as follows. Catalyzes the final step of fatty acid oxidation in which acetyl-CoA is released and the CoA ester of a fatty acid two carbons shorter is formed. The protein is 3-ketoacyl-CoA thiolase of Escherichia coli (strain UTI89 / UPEC).